A 390-amino-acid polypeptide reads, in one-letter code: ATP-sensitive inward rectifier potassium channel 11 (390 aa).

Residues 1–65 lie on the Cytoplasmic side of the membrane; the sequence is MLSRKGIIPE…LQDVFTTLVD (65 aa). ATP contacts are provided by N48 and R50. The helical transmembrane segment at 66 to 92 threads the bilayer; the sequence is LKWPHTLLIFTMSFLCSWLLFAMAWWL. Residues 93-116 lie on the Extracellular side of the membrane; that stretch reads IAFAHGDLAPSEGTAEPCVTSIHS. C110 and C142 are joined by a disulfide. The segment at residues 117-133 is an intramembrane region (discontinuously helical; Pore-forming); sequence FSSAFLFSIEVQVTIGF. 2 residues coordinate K(+): T130 and F133. The Selectivity filter signature appears at 130-135; sequence TIGFGG. Over 134–142 the chain is Extracellular; sequence GGRMVTEEC. The helical transmembrane segment at 143 to 171 threads the bilayer; that stretch reads PLAILILIVQNIVGLMINAIMLGCIFMKT. Topologically, residues 172-390 are cytoplasmic; sequence AQAHRRAETL…KFSISPDSLS (219 aa). R176 is a binding site for a 1,2-diacyl-sn-glycero-3-phospho-(1D-myo-inositol-4,5-bisphosphate). Y330 lines the ATP pocket. T341 is subject to Phosphothreonine; by MAPK1. S385 bears the Phosphoserine; by MAPK1 mark.

This sequence belongs to the inward rectifier-type potassium channel (TC 1.A.2.1) family. KCNJ11 subfamily. In terms of assembly, homotetramer; the homotetramer binds four ATP molecules (one ATP per subunit). Forms an heterooctamer with ABCC8/SUR1; one KCNJ11 homotetramer interacts with four ABCC8/SUR1 molecules. Interacts with ABCC9/SUR2. Phosphorylation by MAPK1 results in changes in channel gating that destabilize the closed states and reduce the ATP sensitivity.

It localises to the membrane. The catalysed reaction is K(+)(in) = K(+)(out). With respect to regulation, KATP channels are regulated by cytoplasmic ATP/ADP ratios; ATP inhibits the channel by closing the pore, while ADP activates the channel. Activated by phosphatidylinositol 4,5-biphosphate (PtdIns(4,5)P2). Functionally, inward rectifier potassium channel that forms the pore of ATP-sensitive potassium channels (KATP), regulating potassium permeability as a function of cytoplasmic ATP and ADP concentrations in many different cells. Inward rectifier potassium channels are characterized by a greater tendency to allow potassium to flow into the cell rather than out of it. Their voltage dependence is regulated by the concentration of extracellular potassium; as external potassium is raised, the voltage range of the channel opening shifts to more positive voltages. The inward rectification is mainly due to the blockage of outward current by internal magnesium. Can be blocked by extracellular barium. In pancreatic cells, it forms KATP channels with ABCC8/SUR1. Can form cardiac and smooth muscle-type KATP channels with ABCC9. In Homo sapiens (Human), this protein is ATP-sensitive inward rectifier potassium channel 11 (KCNJ11).